A 431-amino-acid polypeptide reads, in one-letter code: uncharacterized protein (431 aa).

A run of 12 helical transmembrane segments spans residues 33–53 (VARV…VIYL), 63–83 (FSVF…ANGL), 111–131 (VSGM…PLWS), 143–163 (VALL…LGML), 175–195 (LMVA…VIGW), 197–217 (LVGF…MLMT), 241–261 (AHSI…PVLL), 273–293 (GVVI…LTAM), 318–338 (LIGG…PWIM), 358–378 (AAAV…AAAL), 381–401 (AYSL…LLPL), and 407–427 (TVVA…VALA).

The protein to M.tuberculosis Rv1510 and M.bovis Mb3654.

Its subcellular location is the cell membrane. This is an uncharacterized protein from Mycobacterium tuberculosis (strain ATCC 25618 / H37Rv).